We begin with the raw amino-acid sequence, 246 residues long: DNA repair protein RecO (246 aa).

It belongs to the RecO family.

Involved in DNA repair and RecF pathway recombination. In Methylorubrum populi (strain ATCC BAA-705 / NCIMB 13946 / BJ001) (Methylobacterium populi), this protein is DNA repair protein RecO.